We begin with the raw amino-acid sequence, 235 residues long: Orotidine 5'-phosphate decarboxylase (235 aa).

Substrate contacts are provided by residues Asp-10, Lys-33, Asp-60–Thr-69, Thr-123, Arg-185, Gln-194, Gly-214, and Arg-215. Residue Lys-62 is the Proton donor of the active site.

The protein belongs to the OMP decarboxylase family. Type 1 subfamily. As to quaternary structure, homodimer.

It catalyses the reaction orotidine 5'-phosphate + H(+) = UMP + CO2. It participates in pyrimidine metabolism; UMP biosynthesis via de novo pathway; UMP from orotate: step 2/2. In terms of biological role, catalyzes the decarboxylation of orotidine 5'-monophosphate (OMP) to uridine 5'-monophosphate (UMP). The polypeptide is Orotidine 5'-phosphate decarboxylase (Lactobacillus acidophilus (strain ATCC 700396 / NCK56 / N2 / NCFM)).